Consider the following 257-residue polypeptide: uncharacterized protein (257 aa).

The signal sequence occupies residues 1–22; that stretch reads MRYLKRLSWYISILILIVVIAG. Residue C23 is the site of N-palmitoyl cysteine attachment. Residue C23 is the site of S-diacylglycerol cysteine attachment.

This sequence belongs to the staphylococcal tandem lipoprotein family.

Its subcellular location is the cell membrane. This is an uncharacterized protein from Staphylococcus aureus (strain N315).